The chain runs to 308 residues: Aspartate carbamoyltransferase catalytic subunit (308 aa).

Carbamoyl phosphate-binding residues include Arg-55 and Thr-56. Lys-83 contacts L-aspartate. Carbamoyl phosphate contacts are provided by Arg-105, His-133, and Gln-136. L-aspartate contacts are provided by Arg-166 and Arg-220. Residues Gly-261 and Pro-262 each contribute to the carbamoyl phosphate site.

The protein belongs to the aspartate/ornithine carbamoyltransferase superfamily. ATCase family. As to quaternary structure, heterododecamer (2C3:3R2) of six catalytic PyrB chains organized as two trimers (C3), and six regulatory PyrI chains organized as three dimers (R2).

The enzyme catalyses carbamoyl phosphate + L-aspartate = N-carbamoyl-L-aspartate + phosphate + H(+). Its pathway is pyrimidine metabolism; UMP biosynthesis via de novo pathway; (S)-dihydroorotate from bicarbonate: step 2/3. Catalyzes the condensation of carbamoyl phosphate and aspartate to form carbamoyl aspartate and inorganic phosphate, the committed step in the de novo pyrimidine nucleotide biosynthesis pathway. This is Aspartate carbamoyltransferase catalytic subunit from Chlorobaculum tepidum (strain ATCC 49652 / DSM 12025 / NBRC 103806 / TLS) (Chlorobium tepidum).